We begin with the raw amino-acid sequence, 273 residues long: Large ribosomal subunit protein uL2 (273 aa).

The segment at 221–273 is disordered; sequence RGTAMNPVDHPHGGGEGRNFGKHPVSPWGVQTKGKKTRHNKRTDKYIVRRRGK. The span at 253–273 shows a compositional bias: basic residues; the sequence is KGKKTRHNKRTDKYIVRRRGK.

The protein belongs to the universal ribosomal protein uL2 family. In terms of assembly, part of the 50S ribosomal subunit. Forms a bridge to the 30S subunit in the 70S ribosome.

One of the primary rRNA binding proteins. Required for association of the 30S and 50S subunits to form the 70S ribosome, for tRNA binding and peptide bond formation. It has been suggested to have peptidyltransferase activity; this is somewhat controversial. Makes several contacts with the 16S rRNA in the 70S ribosome. This is Large ribosomal subunit protein uL2 from Mannheimia succiniciproducens (strain KCTC 0769BP / MBEL55E).